A 276-amino-acid polypeptide reads, in one-letter code: Secreted RxLR effector protein 120 (276 aa).

The first 21 residues, 1–21 (MRGAYYVITALLVVASSQTSA), serve as a signal peptide directing secretion. The RxLR-dEER signature appears at 48-65 (QSLRGSRDVPDDLAHEER). Residues 97–130 (GKRPRVAEKDALEKASGADEASKKPRNTATDDAF) are disordered. The segment covering 101-119 (RVAEKDALEKASGADEASK) has biased composition (basic and acidic residues).

Belongs to the RxLR effector family.

It localises to the secreted. The protein localises to the host nucleus. Secreted effector that completely suppresses the host cell death induced by cell death-inducing proteins. The protein is Secreted RxLR effector protein 120 of Plasmopara viticola (Downy mildew of grapevine).